A 748-amino-acid polypeptide reads, in one-letter code: E3 ubiquitin-protein ligase SMURF2 (748 aa).

The 119-residue stretch at 1–119 folds into the C2 domain; it reads MSNPGGRRNG…TGYQRLDLCK (119 aa). Residue Lys119 forms a Glycyl lysine isopeptide (Lys-Gly) (interchain with G-Cter in ubiquitin) linkage. WW domains are found at residues 157–190, 251–284, and 297–330; these read NDLP…RPTR, PDLP…DPRV, and GPLP…DPRL. Residues 414-748 enclose the HECT domain; sequence RPKDLWKRLM…IEETCGFAVE (335 aa). Cys716 serves as the catalytic Glycyl thioester intermediate.

In terms of assembly, interacts (via WW domains) with SMAD1. Interacts (via WW domains) with SMAD2 (via PY-motif). Interacts (via WW domains) with SMAD3 (via PY-motif). Interacts with SMAD6. Interacts with SMAD7 (via PY-motif) and TGFBR1; SMAD7 recruits SMURF2 to the TGF-beta receptor and regulates its degradation. Does not interact with SMAD4; SMAD4 lacks a PY-motif. Interacts with AIMP1. Interacts with NDFIP1 and NDFIP2; this interaction activates the E3 ubiquitin-protein ligase. Interacts with TTC3. Post-translationally, auto-ubiquitinated and ubiquitinated in the presence of RNF11 and UBE2D1. Ubiquitinated by the SCF(FBXL15) complex and TTC3, leading to its degradation by the proteasome. 'Lys-48'-linked polyubiquitination mediated by TRAF4 at Lys-119 leads to SMURF2 proteasomal degradation.

The protein localises to the nucleus. It is found in the cytoplasm. Its subcellular location is the cell membrane. It localises to the membrane raft. It catalyses the reaction S-ubiquitinyl-[E2 ubiquitin-conjugating enzyme]-L-cysteine + [acceptor protein]-L-lysine = [E2 ubiquitin-conjugating enzyme]-L-cysteine + N(6)-ubiquitinyl-[acceptor protein]-L-lysine.. It functions in the pathway protein modification; protein ubiquitination. Its activity is regulated as follows. Activated by NDFIP1- and NDFIP2-binding. In terms of biological role, E3 ubiquitin-protein ligase which accepts ubiquitin from an E2 ubiquitin-conjugating enzyme in the form of a thioester and then directly transfers the ubiquitin to targeted substrates. Interacts with SMAD7 to trigger SMAD7-mediated transforming growth factor beta/TGF-beta receptor ubiquitin-dependent degradation, thereby down-regulating TGF-beta signaling. In addition, interaction with SMAD7 activates autocatalytic degradation, which is prevented by interaction with AIMP1. Also forms a stable complex with TGF-beta receptor-mediated phosphorylated SMAD1, SMAD2 and SMAD3, and targets SMAD1 and SMAD2 for ubiquitination and proteasome-mediated degradation. SMAD2 may recruit substrates, such as SNON, for ubiquitin-dependent degradation. Negatively regulates TGFB1-induced epithelial-mesenchymal transition and myofibroblast differentiation. This chain is E3 ubiquitin-protein ligase SMURF2, found in Mus musculus (Mouse).